Reading from the N-terminus, the 128-residue chain is Large-conductance mechanosensitive channel (128 aa).

Transmembrane regions (helical) follow at residues 11 to 31 and 70 to 90; these read FALK…AAFG and GAFI…FIFV.

It belongs to the MscL family. As to quaternary structure, homopentamer.

Its subcellular location is the cell membrane. In terms of biological role, channel that opens in response to stretch forces in the membrane lipid bilayer. May participate in the regulation of osmotic pressure changes within the cell. The protein is Large-conductance mechanosensitive channel of Listeria monocytogenes serotype 4a (strain HCC23).